Reading from the N-terminus, the 96-residue chain is Cytochrome c2 iso-2 (96 aa).

Heme c contacts are provided by Cys10, Cys13, His14, and Met75.

The protein belongs to the cytochrome c family. Post-translationally, binds 1 heme c group covalently per subunit.

Cytochrome c2 is found mainly in purple, non-sulfur, photosynthetic bacteria where it functions as the electron donor to the oxidized bacteriochlorophyll in the photophosphorylation pathway. However, it may also have a role in the respiratory chain and is found in some non-photosynthetic bacteria. The protein is Cytochrome c2 iso-2 of Magnetospirillum fulvum (Rhodospirillum fulvum).